We begin with the raw amino-acid sequence, 275 residues long: Large ribosomal subunit protein uL2c (275 aa).

Positions V224 to H263 are disordered.

Belongs to the universal ribosomal protein uL2 family. In terms of assembly, part of the 50S ribosomal subunit.

Its subcellular location is the plastid. The protein resides in the chloroplast. This Chaetosphaeridium globosum (Charophycean green alga) protein is Large ribosomal subunit protein uL2c (rpl2).